We begin with the raw amino-acid sequence, 148 residues long: Large ribosomal subunit protein bL9 (148 aa).

Belongs to the bacterial ribosomal protein bL9 family.

Functionally, binds to the 23S rRNA. The polypeptide is Large ribosomal subunit protein bL9 (Lachnoclostridium phytofermentans (strain ATCC 700394 / DSM 18823 / ISDg) (Clostridium phytofermentans)).